Here is a 441-residue protein sequence, read N- to C-terminus: Probable D-serine dehydratase (441 aa).

Lys-117 is subject to N6-(pyridoxal phosphate)lysine.

The protein belongs to the serine/threonine dehydratase family. DsdA subfamily. It depends on pyridoxal 5'-phosphate as a cofactor.

The catalysed reaction is D-serine = pyruvate + NH4(+). The polypeptide is Probable D-serine dehydratase (Acinetobacter baylyi (strain ATCC 33305 / BD413 / ADP1)).